A 144-amino-acid polypeptide reads, in one-letter code: Large ribosomal subunit protein uL15 (144 aa).

Residues 1-49 (MRLNTLSPAAGAKSAAKRVGRGIGSGTGKTCGRGHKGQKSRSGGGVRVG) form a disordered region. Positions 21–31 (RGIGSGTGKTC) are enriched in gly residues.

Belongs to the universal ribosomal protein uL15 family. As to quaternary structure, part of the 50S ribosomal subunit.

Functionally, binds to the 23S rRNA. The protein is Large ribosomal subunit protein uL15 of Shewanella halifaxensis (strain HAW-EB4).